We begin with the raw amino-acid sequence, 193 residues long: nitroreductase FRM2 (193 aa).

This sequence belongs to the nitroreductase family. The cofactor is FMN.

It is found in the cytoplasm. The protein localises to the nucleus. The enzyme catalyses 4-(hydroxyamino)quinoline N-oxide + 2 NAD(+) + H2O = 4-nitroquinoline N-oxide + 2 NADH + 2 H(+). In terms of biological role, type II nitroreductase, able to reduce 4-nitroquinoline N-oxide (4-NQO) into 4-aminoquinoline-N-oxide (4-AQO) via 4-hydroxyaminoquinoline (4-HAQO), using NADH as reductant. involved in the oxidative stress response. Plays a possible role in the metal stress response. Involved in negative regulation of fatty acid metabolism. The sequence is that of nitroreductase FRM2 from Saccharomyces cerevisiae (strain ATCC 204508 / S288c) (Baker's yeast).